The chain runs to 162 residues: Caveolin-2 (162 aa).

Residues 1-86 (MGLETEKADV…FEISKYVMYK (86 aa)) are Cytoplasmic-facing. Tyrosine 19 carries the phosphotyrosine; by SRC modification. A phosphoserine mark is found at serine 20 and serine 23. Tyrosine 27 is modified (phosphotyrosine; by SRC). A Phosphoserine modification is found at serine 36. The segment at residues 87–107 (FLTVFLAIPLAFLAGILFATL) is an intramembrane region (helical). Over 108–162 (SCLHIWIIMPFVKTCLMVLPSVQTIWKSVTDAIIAPLCTSIGRSFSSVSLQLSQD) the chain is Cytoplasmic.

It belongs to the caveolin family. Monomer or homodimer. Interacts with CAV1; the interaction forms a stable heterooligomeric complex that is required for targeting to lipid rafts and for caveolae formation. Tyrosine phosphorylated forms do not form heterooligomers with the Tyr-19-phosphorylated form existing as a monomer or dimer, and the Tyr-27-form as a monomer only. Interacts (tyrosine phosphorylated form) with the SH2 domain-containing proteins, RASA1, NCK1 and SRC. Interacts (tyrosine phosphorylated form) with INSR, the interaction (Tyr-27-phosphorylated form) is increased on insulin stimulation. Interacts (Tyr-19 phosphorylated form) with MAPK1 (phosphorylated form); the interaction, promoted by insulin, leads to nuclear location and MAPK1 activation. Interacts with STAT3; the interaction is increased on insulin-induced tyrosine phosphorylation leading to STAT activation. In terms of processing, phosphorylated on serine and tyrosine residues. CAV1 promotes phosphorylation on Ser-23 which then targets the complex to the plasma membrane, lipid rafts and caveolae. Phosphorylation on Ser-36 appears to modulate mitosis in endothelial cells. Phosphorylation on both Tyr-19 and Tyr-27 is required for insulin-induced 'Ser-727' phosphorylation of STAT3 and its activation. Phosphorylation on Tyr-19 is required for insulin-induced phosphorylation of MAPK1 and DNA binding of STAT3. Tyrosine phosphorylation is induced by both EGF and insulin (By. similarity).

It localises to the nucleus. Its subcellular location is the cytoplasm. It is found in the golgi apparatus membrane. The protein resides in the cell membrane. The protein localises to the membrane. It localises to the caveola. Its function is as follows. May act as a scaffolding protein within caveolar membranes. Interacts directly with G-protein alpha subunits and can functionally regulate their activity. Acts as an accessory protein in conjunction with CAV1 in targeting to lipid rafts and driving caveolae formation. The Ser-36 phosphorylated form has a role in modulating mitosis in endothelial cells. Positive regulator of cellular mitogenesis of the MAPK signaling pathway. Required for the insulin-stimulated nuclear translocation and activation of MAPK1 and STAT3, and the subsequent regulation of cell cycle progression. This Plecturocebus moloch (Dusky titi monkey) protein is Caveolin-2 (CAV2).